Consider the following 459-residue polypeptide: Methionine aminopeptidase 2-2 (459 aa).

Residues 1–12 (MGSKSPEDHRQG) show a composition bias toward basic and acidic residues. The segment at 1-87 (MGSKSPEDHR…KKLSVVQQTS (87 aa)) is disordered. Positions 43–54 (GQDEDGDDDDDE) are enriched in acidic residues. The segment covering 55–66 (KTGIDLKTNDGA) has biased composition (basic and acidic residues). Over residues 67 to 79 (KKKRKRNKKKSKK) the composition is skewed to basic residues. H210 contributes to the substrate binding site. D231, D242, and H311 together coordinate a divalent metal cation. H319 provides a ligand contact to substrate. 2 residues coordinate a divalent metal cation: E344 and E440.

This sequence belongs to the peptidase M24A family. Methionine aminopeptidase eukaryotic type 2 subfamily. The cofactor is Co(2+). Requires Zn(2+) as cofactor. Mn(2+) is required as a cofactor. Fe(2+) serves as cofactor.

Its subcellular location is the cytoplasm. It catalyses the reaction Release of N-terminal amino acids, preferentially methionine, from peptides and arylamides.. In terms of biological role, cotranslationally removes the N-terminal methionine from nascent proteins. The N-terminal methionine is often cleaved when the second residue in the primary sequence is small and uncharged (Met-Ala-, Cys, Gly, Pro, Ser, Thr, or Val). The protein is Methionine aminopeptidase 2-2 of Pyrenophora teres f. teres (strain 0-1) (Barley net blotch fungus).